Consider the following 213-residue polypeptide: Succinate dehydrogenase subunit 3-1, mitochondrial (213 aa).

Residues 1-105 constitute a mitochondrion transit peptide; it reads MAATALFRSI…LDVGTSKRLF (105 aa). Heme is bound at residue histidine 130. Residues 148–165 traverse the membrane as a helical segment; sequence ISGVYLTGVTFAGYLLYL.

Component of complex II composed of eight subunits in plants: four classical SDH subunits SDH1, SDH2, SDH3 and SDH4 (a flavoprotein (FP), an iron-sulfur protein (IP), and a cytochrome b composed of a large and a small subunit.), as well as four subunits unknown in mitochondria from bacteria and heterotrophic eukaryotes. Heme serves as cofactor. As to expression, expressed in flowers, inflorescences and stems.

It localises to the mitochondrion inner membrane. It participates in carbohydrate metabolism; tricarboxylic acid cycle. Membrane-anchoring subunit of succinate dehydrogenase (SDH). The protein is Succinate dehydrogenase subunit 3-1, mitochondrial of Arabidopsis thaliana (Mouse-ear cress).